A 1098-amino-acid chain; its full sequence is WD repeat-containing protein 72 (1098 aa).

8 WD repeats span residues 15-54, 60-102, 158-196, 315-359, 399-438, 456-501, 504-549, and 552-591; these read APPH…KISA, GHSA…CVEK, WINC…NSIQ, ENKN…VSKF, AGTA…KARL, GHHQ…ILHK, LEAG…CLLR, and KHLF…LERH. Residues Ser1077 and Ser1079 each carry the phosphoserine modification.

Its subcellular location is the cytoplasmic vesicle. Its function is as follows. Plays a major role in formation of tooth enamel. Specifically required during the maturation phase of amelogenesis for normal formation of the enamel matrix and clearance of enamel proteins. May be involved in localization of the calcium transporter SLC24A4 to the ameloblast cell membrane. The chain is WD repeat-containing protein 72 (WDR72) from Pongo abelii (Sumatran orangutan).